The sequence spans 163 residues: Anaerobic nitrite reductase HB1 (163 aa).

In terms of domain architecture, Globin spans 8–157 (VFTEEQEALV…LVAAIKIEMK (150 aa)). The Homodimerization signature appears at 41–45 (EIAPS). 6 residues coordinate heme b: serine 51, lysine 65, histidine 69, lysine 99, threonine 103, and histidine 104. The short motif at 111–123 (DEHFEVTKFALLE) is the Homodimerization element.

It belongs to the plant globin family. In terms of assembly, homodimer. Heme b is required as a cofactor.

It localises to the cytoplasm. It is found in the nucleus. It catalyses the reaction Fe(III)-heme b-[protein] + nitric oxide + H2O = Fe(II)-heme b-[protein] + nitrite + 2 H(+). Functionally, phytoglobin that reduces nitrite to nitric oxide (NO) under anoxic conditions (e.g. during flooding or in waterlogged soil). May not function as an oxygen storage or transport protein. Has an unusually high affinity for O(2) through an hexacoordinate heme iron because of a very low dissociation constant. This Gossypium hirsutum (Upland cotton) protein is Anaerobic nitrite reductase HB1.